Here is a 217-residue protein sequence, read N- to C-terminus: Protein-L-isoaspartate O-methyltransferase (217 aa).

S65 is a catalytic residue.

The protein belongs to the methyltransferase superfamily. L-isoaspartyl/D-aspartyl protein methyltransferase family.

It is found in the cytoplasm. The catalysed reaction is [protein]-L-isoaspartate + S-adenosyl-L-methionine = [protein]-L-isoaspartate alpha-methyl ester + S-adenosyl-L-homocysteine. Catalyzes the methyl esterification of L-isoaspartyl residues in peptides and proteins that result from spontaneous decomposition of normal L-aspartyl and L-asparaginyl residues. It plays a role in the repair and/or degradation of damaged proteins. The sequence is that of Protein-L-isoaspartate O-methyltransferase from Methanoregula boonei (strain DSM 21154 / JCM 14090 / 6A8).